The sequence spans 124 residues: MARIAGVDLPSNKKIEIALTYIYGIGRTTSKKILQATGVDPNKRVKDLTEEEISKLREEIENNYKVEGDLRQEVAANIRRLIEIGCYRGIRHKRGLPVRGQRTRCNARTRKGPRKTVGAKRKEK.

Positions 98–124 are disordered; the sequence is VRGQRTRCNARTRKGPRKTVGAKRKEK.

This sequence belongs to the universal ribosomal protein uS13 family. In terms of assembly, part of the 30S ribosomal subunit. Forms a loose heterodimer with protein S19. Forms two bridges to the 50S subunit in the 70S ribosome.

Located at the top of the head of the 30S subunit, it contacts several helices of the 16S rRNA. In the 70S ribosome it contacts the 23S rRNA (bridge B1a) and protein L5 of the 50S subunit (bridge B1b), connecting the 2 subunits; these bridges are implicated in subunit movement. Contacts the tRNAs in the A and P-sites. This is Small ribosomal subunit protein uS13 from Dictyoglomus thermophilum (strain ATCC 35947 / DSM 3960 / H-6-12).